The following is a 238-amino-acid chain: Tetraspanin-4 (238 aa).

At 1–13 the chain is on the cytoplasmic side; the sequence is MARACLQAVKYLM. A helical transmembrane segment spans residues 14–34; it reads FAFNLLFWLGGCGVLGVGIWL. Over 35 to 55 the chain is Extracellular; sequence AATQGSFATLSSSFPSLSAAN. Residues 56 to 76 traverse the membrane as a helical segment; sequence LLIITGAFVMAIGFVGCLGAI. The Cytoplasmic portion of the chain corresponds to 77 to 85; the sequence is KENKCLLLT. A helical transmembrane segment spans residues 86 to 106; the sequence is FFLLLLLVFLLEATIAILFFA. Residues 107-201 lie on the Extracellular side of the membrane; the sequence is YTDKIDRYAQ…ETVKVWLQEN (95 aa). Asn152 and Asn161 each carry an N-linked (GlcNAc...) asparagine glycan. A helical transmembrane segment spans residues 202-222; the sequence is LLAVGIFGLCTALVQILGLTF. Residues 223 to 238 lie on the Cytoplasmic side of the membrane; it reads AMTMYCQVVKADTYCA.

The protein belongs to the tetraspanin (TM4SF) family. As to quaternary structure, forms a complex with integrins.

The protein resides in the membrane. In Pongo abelii (Sumatran orangutan), this protein is Tetraspanin-4 (TSPAN4).